Reading from the N-terminus, the 356-residue chain is Geranylgeranyl pyrophosphate synthase penG (356 aa).

Lys83, Arg86, and His115 together coordinate isopentenyl diphosphate. Mg(2+) is bound by residues Asp122 and Asp126. Residue Arg131 coordinates dimethylallyl diphosphate. Residue Arg132 participates in isopentenyl diphosphate binding. Dimethylallyl diphosphate-binding residues include Lys209, Thr210, and Gln243. Position 246 (Asp246) interacts with Mg(2+). Dimethylallyl diphosphate contacts are provided by Asn250, Lys260, and Lys270.

This sequence belongs to the FPP/GGPP synthase family. Requires Mg(2+) as cofactor.

It catalyses the reaction isopentenyl diphosphate + dimethylallyl diphosphate = (2E)-geranyl diphosphate + diphosphate. The enzyme catalyses isopentenyl diphosphate + (2E)-geranyl diphosphate = (2E,6E)-farnesyl diphosphate + diphosphate. The catalysed reaction is isopentenyl diphosphate + (2E,6E)-farnesyl diphosphate = (2E,6E,10E)-geranylgeranyl diphosphate + diphosphate. Its pathway is secondary metabolite biosynthesis. In terms of biological role, geranylgeranyl pyrophosphate synthase; part of the gene cluster that mediates the biosynthesis of the indole diterpenes penitrems. The geranylgeranyl diphosphate (GGPP) synthase ptmG catalyzes the first step in penitrem biosynthesis via conversion of farnesyl pyrophosphate and isopentyl pyrophosphate into geranylgeranyl pyrophosphate (GGPP). Condensation of indole-3-glycerol phosphate with GGPP by the prenyl transferase ptmC then forms 3-geranylgeranylindole (3-GGI). Epoxidation by the FAD-dependent monooxygenase ptmM leads to a epoxidized-GGI that is substrate of the terpene cyclase ptmB for cyclization to yield paspaline. Paspaline is subsequently converted to 13-desoxypaxilline by the cytochrome P450 monooxygenase ptmP, the latter being then converted to paxilline by the cytochrome P450 monooxygenase ptmQ. Paxilline is converted to beta-paxitriol via C-10 ketoreduction by the short-chain dehydrogenase ptmH which can be monoprenylated at the C-20 by the indole diterpene prenyltransferase ptmD. A two-step elimination (acetylation and elimination) process performed by the O-acetyltransferase ptmV and ptmI leads to the production of the prenylated form of penijanthine. The FAD-linked oxidoreductase ptmO then converts the prenylated form of penijanthine into PC-M5 which is in turn transformed into PC-M4 by the aromatic dimethylallyltransferase ptmE. Five sequential oxidative transformations performed by the cytochrome P450 monooxygenases ptmK, ptmU, ptmL, ptmN and ptmJ yield the various penitrem compounds. PtmK, ptmU and ptmM are involved in the formation of the key bicyclic ring of penitrem C via the formation of the intermediates secopenitrem D and penitrem D. PtmL catalyzes the epoxidation of penitrem D and C to yield penitrem B and F, respectively. PtmJ catalyzes the last benzylic hydroxylation to convert penitrem B to prenitrem E and penitrem F to penitrem A. The chain is Geranylgeranyl pyrophosphate synthase penG from Penicillium ochrochloron.